The primary structure comprises 402 residues: N-acetyltransferase Eis (402 aa).

Residues 3 to 154 (VTLCSPTEDD…RFARFHADAP (152 aa)) form the N-acetyltransferase domain. Residues 85 to 87 (VAV), 93 to 98 (RRGLLR), and 121 to 122 (SE) each bind acetyl-CoA. The active-site Proton donor is the Y126. The Proton acceptor; via carboxylate role is filled by F402.

The protein belongs to the acetyltransferase Eis family. In terms of assembly, homohexamer; trimer of dimers.

It localises to the secreted. Its subcellular location is the host cytoplasmic vesicle. It is found in the host phagosome. The protein localises to the extracellular vesicle. The protein resides in the bacterial extracellular vesicle. It localises to the host extracellular space. It catalyses the reaction L-lysyl-[protein] + acetyl-CoA = N(6)-acetyl-L-lysyl-[protein] + CoA + H(+). Effector that is released into the host cell and affects host immune responses. Acts as an acetyltransferase that acetylates lysine residues of host proteins. The chain is N-acetyltransferase Eis from Mycobacterium bovis (strain BCG / Pasteur 1173P2).